Consider the following 381-residue polypeptide: Arf-GAP with dual PH domain-containing protein 2 (381 aa).

The Arf-GAP domain maps to 9–132; sequence KRLLELLQAA…TAIDKAVSHP (124 aa). Residues 25–48 form a C4-type zinc finger; it reads CADCGAADPDWASYKLGIFICLHC. PH domains are found at residues 132–233 and 255–361; these read PGNR…AARL and NYLK…GVLS.

Its subcellular location is the cytoplasm. It localises to the cell membrane. Functionally, GTPase-activating protein for the ADP ribosylation factor family (Potential). Binds phosphatidylinositol 3,4,5-trisphosphate (PtdInsP3) and inositol 1,3,4,5-tetrakisphosphate (InsP4). Possesses a stoichiometry of two binding sites for InsP4 with identical affinity. This Mus musculus (Mouse) protein is Arf-GAP with dual PH domain-containing protein 2 (Adap2).